The sequence spans 331 residues: Glutamyl-tRNA reductase (331 aa).

Substrate-binding positions include 49–52, Ser-107, 112–114, and Gln-118; these read TCNR and EDQ. Cys-50 (nucleophile) is an active-site residue. Position 184–189 (184–189) interacts with NADP(+); it reads GNGEIG.

The protein belongs to the glutamyl-tRNA reductase family. Homodimer.

It catalyses the reaction (S)-4-amino-5-oxopentanoate + tRNA(Glu) + NADP(+) = L-glutamyl-tRNA(Glu) + NADPH + H(+). It functions in the pathway porphyrin-containing compound metabolism; protoporphyrin-IX biosynthesis; 5-aminolevulinate from L-glutamyl-tRNA(Glu): step 1/2. Functionally, catalyzes the NADPH-dependent reduction of glutamyl-tRNA(Glu) to glutamate 1-semialdehyde (GSA). This Acetivibrio thermocellus (strain ATCC 27405 / DSM 1237 / JCM 9322 / NBRC 103400 / NCIMB 10682 / NRRL B-4536 / VPI 7372) (Clostridium thermocellum) protein is Glutamyl-tRNA reductase.